A 210-amino-acid polypeptide reads, in one-letter code: Pyridoxine/pyridoxamine 5'-phosphate oxidase (210 aa).

Substrate is bound by residues Arg-7–Tyr-10 and Lys-65. Residues Arg-60–Lys-65, Phe-75–Thr-76, Arg-81, Lys-82, and Gln-104 each bind FMN. Substrate contacts are provided by Tyr-122, Arg-126, and Ser-130. Residues Gln-139 to Ser-140 and Trp-183 each bind FMN. Position 189 to 191 (Arg-189 to His-191) interacts with substrate. Arg-193 provides a ligand contact to FMN.

Belongs to the pyridoxamine 5'-phosphate oxidase family. In terms of assembly, homodimer. Requires FMN as cofactor.

The catalysed reaction is pyridoxamine 5'-phosphate + O2 + H2O = pyridoxal 5'-phosphate + H2O2 + NH4(+). The enzyme catalyses pyridoxine 5'-phosphate + O2 = pyridoxal 5'-phosphate + H2O2. It functions in the pathway cofactor metabolism; pyridoxal 5'-phosphate salvage; pyridoxal 5'-phosphate from pyridoxamine 5'-phosphate: step 1/1. It participates in cofactor metabolism; pyridoxal 5'-phosphate salvage; pyridoxal 5'-phosphate from pyridoxine 5'-phosphate: step 1/1. In terms of biological role, catalyzes the oxidation of either pyridoxine 5'-phosphate (PNP) or pyridoxamine 5'-phosphate (PMP) into pyridoxal 5'-phosphate (PLP). The protein is Pyridoxine/pyridoxamine 5'-phosphate oxidase of Haemophilus influenzae (strain 86-028NP).